The chain runs to 114 residues: uncharacterized protein (114 aa).

A signal peptide spans 1–19; that stretch reads MKASYLVLIFISIFSMAQA. Residue Ser41 is modified to Phosphoserine.

The protein belongs to the protease inhibitor I9 family.

This is an uncharacterized protein from Saccharomyces cerevisiae (strain ATCC 204508 / S288c) (Baker's yeast).